Consider the following 407-residue polypeptide: Snake venom metalloproteinase ACLH (407 aa).

The signal sequence occupies residues 1–20 (MIQVLLVTLCLAAFPYQGSS). Residues 21–187 (IILESGNVND…PIKKASQLNL (167 aa)) constitute a propeptide that is removed on maturation. Residues 193–389 (RYVELVTVVD…ENPQCILNKP (197 aa)) form the Peptidase M12B domain. Ca(2+) is bound by residues Glu-196 and Asp-280. 3 disulfides stabilise this stretch: Cys-304/Cys-384, Cys-344/Cys-368, and Cys-346/Cys-351. Position 329 (His-329) interacts with Zn(2+). Glu-330 is an active-site residue. Positions 333 and 339 each coordinate Zn(2+). The N-linked (GlcNAc...) asparagine glycan is linked to Asn-367. Residues Cys-384 and Asn-387 each coordinate Ca(2+).

The protein belongs to the venom metalloproteinase (M12B) family. P-I subfamily. In terms of assembly, monomer. Zn(2+) is required as a cofactor. Post-translationally, contains sialic acid terminally alpha(2-6)-linked to galactose in a complex N-glycan chain. In terms of tissue distribution, expressed by the venom gland.

It localises to the secreted. Its function is as follows. This zinc hemorrhagic metalloproteinase has fibrino(geno)lytic activities. It causes hemorrhage and has myonecrotic activity on both fiber types I and II. The recombinant enzyme, without post-translational modifications, also has proteolytic activity, but does not show any hemorrhagic activity. In Agkistrodon contortrix laticinctus (Broad-banded copperhead), this protein is Snake venom metalloproteinase ACLH.